The following is a 452-amino-acid chain: Bifunctional F420 biosynthesis protein FbiB (452 aa).

Positions 1-248 are coenzyme F420:L-glutamate ligase; the sequence is MVSAPGDHAG…AGEEDLFWLG (248 aa). GTP is bound by residues 24–27, serine 54, and lysine 59; that span reads LPEF. Residue aspartate 113 participates in a divalent metal cation binding. Asparagine 116 provides a ligand contact to GTP. A divalent metal cation is bound by residues aspartate 154 and threonine 155. Residues 249-452 are dehydro-coenzyme F420-0 reductase; the sequence is TAEAVERGRR…RDPGDGLVER (204 aa). FMN-binding positions include 264–268 and alanine 292; that span reads RRSVR. Residue aspartate 324 coordinates coenzyme F420-(gamma-Glu)n. Residues glycine 403 and arginine 440 each contribute to the FMN site.

The protein in the N-terminal section; belongs to the CofE family. Mg(2+) is required as a cofactor. It depends on Mn(2+) as a cofactor. The cofactor is K(+).

It catalyses the reaction oxidized coenzyme F420-0 + GTP + L-glutamate = oxidized coenzyme F420-1 + GDP + phosphate + H(+). It carries out the reaction oxidized coenzyme F420-0 + FMN + H(+) = dehydro coenzyme F420-0 + FMNH2. The enzyme catalyses oxidized coenzyme F420-1 + GTP + L-glutamate = oxidized coenzyme F420-2 + GDP + phosphate + H(+). Its pathway is cofactor biosynthesis; coenzyme F420 biosynthesis. Bifunctional enzyme that catalyzes the GTP-dependent successive addition of two or more gamma-linked L-glutamates to the L-lactyl phosphodiester of 7,8-didemethyl-8-hydroxy-5-deazariboflavin (F420-0) to form polyglutamated F420 derivatives, and the FMNH2-dependent reduction of dehydro-F420-0 to form F420-0. This is Bifunctional F420 biosynthesis protein FbiB from Nocardia farcinica (strain IFM 10152).